The following is a 307-amino-acid chain: UDP-N-acetylenolpyruvoylglucosamine reductase (307 aa).

In terms of domain architecture, FAD-binding PCMH-type spans 34–198 (LGGKADVYIT…LEATFALKKA (165 aa)). Residue R177 is part of the active site. S227 functions as the Proton donor in the catalytic mechanism. Residue E297 is part of the active site.

This sequence belongs to the MurB family. Requires FAD as cofactor.

The protein resides in the cytoplasm. The enzyme catalyses UDP-N-acetyl-alpha-D-muramate + NADP(+) = UDP-N-acetyl-3-O-(1-carboxyvinyl)-alpha-D-glucosamine + NADPH + H(+). It functions in the pathway cell wall biogenesis; peptidoglycan biosynthesis. In terms of biological role, cell wall formation. In Oceanobacillus iheyensis (strain DSM 14371 / CIP 107618 / JCM 11309 / KCTC 3954 / HTE831), this protein is UDP-N-acetylenolpyruvoylglucosamine reductase.